Here is a 382-residue protein sequence, read N- to C-terminus: Telomere-binding protein OPG082 (382 aa).

Belongs to the orthopoxvirus OPG082 family.

The protein resides in the virion. In terms of biological role, binds to the hairpin form of the viral telomeric sequence. Might direct genome encapsidation into the virus particle. The sequence is that of Telomere-binding protein OPG082 (OPG082) from Monkeypox virus.